A 428-amino-acid polypeptide reads, in one-letter code: Enolase 2 (428 aa).

Gln162 serves as a coordination point for (2R)-2-phosphoglycerate. The Proton donor role is filled by Glu204. Asp241, Glu285, and Asp312 together coordinate Mg(2+). (2R)-2-phosphoglycerate-binding residues include Lys337, Arg366, Ser367, and Lys388. Lys337 serves as the catalytic Proton acceptor.

It belongs to the enolase family. Requires Mg(2+) as cofactor.

Its subcellular location is the cytoplasm. The protein resides in the secreted. It localises to the cell surface. The enzyme catalyses (2R)-2-phosphoglycerate = phosphoenolpyruvate + H2O. The protein operates within carbohydrate degradation; glycolysis; pyruvate from D-glyceraldehyde 3-phosphate: step 4/5. In terms of biological role, catalyzes the reversible conversion of 2-phosphoglycerate (2-PG) into phosphoenolpyruvate (PEP). It is essential for the degradation of carbohydrates via glycolysis. The polypeptide is Enolase 2 (Lactobacillus johnsonii (strain CNCM I-12250 / La1 / NCC 533)).